Consider the following 1035-residue polypeptide: Electrogenic sodium bicarbonate cotransporter 1 (1035 aa).

The Cytoplasmic segment spans residues 1 to 421 (MSSEKECLEN…FASDFYDALS (421 aa)). Polar residues predominate over residues 192–217 (SRLFSTPDNGSPTMTHRNLTSTSLND). Disordered regions lie at residues 192–222 (SRLFSTPDNGSPTMTHRNLTSTSLNDVSDKP) and 348–389 (IEPP…GDSE). Basic and acidic residues predominate over residues 376-389 (APHDDGGGGHGDSE). A helical membrane pass occupies residues 422-446 (IQSLSAILFIYLGTVTNAITFGGLL). Topologically, residues 447–456 (GDATENMQGV) are extracellular. A helical membrane pass occupies residues 457–475 (LESFLGTAVSGAVFCLFGG). Residue Gln-476 is a topological domain, cytoplasmic. Residues 477 to 497 (PLTILSSTGPVLVFERLLFNF) form a discontinuously helical membrane-spanning segment. Topologically, residues 498–505 (SKDNDFDY) are extracellular. The helical transmembrane segment at 506 to 526 (LEFRLWIGLWSAFQCLILVAT) threads the bilayer. Topologically, residues 527 to 540 (DASFLVKYFTRFTE) are cytoplasmic. The chain crosses the membrane as a helical span at residues 541–564 (EGFSSLISFIFIYDAFKKMIKLAD). The Extracellular segment spans residues 565-648 (YYPINSHFKV…GSNCKYVPDI (84 aa)). N-linked (GlcNAc...) asparagine glycans are attached at residues Asn-591, Asn-596, Asn-609, and Asn-617. Residues 649 to 666 (TLMSFILFLGTYTCSMAL) form a helical membrane-spanning segment. Residues 667-681 (KKFKTSRYFPTTARK) lie on the Cytoplasmic side of the membrane. A helical transmembrane segment spans residues 682–701 (LISDFAIILSILIFCGLDAL). Residues 702 to 735 (LGVDTPKLIVPSEFKPTSPNRGWFVPPFGGNPWW) are Extracellular-facing. The helical transmembrane segment at 736–763 (VYLAAAIPALLVTILIFMDQQITGVIVN) threads the bilayer. Residues 764–775 (RKEHKLKKGAGY) are Cytoplasmic-facing. The helical transmembrane segment at 776 to 792 (HLDLFWVAILMVVCSFM) threads the bilayer. Ala-793 is a topological domain (extracellular). Residues 794–811 (LPWYVAATVISIAHIDSL) form a discontinuously helical membrane-spanning segment. At 812–833 (KMETETSAPGEQPKFLGVREQR) the chain is on the cytoplasmic side. The chain crosses the membrane as a helical span at residues 834–850 (VTGTVVFLLTGLSVFMA). The Extracellular portion of the chain corresponds to 851 to 857 (PILKFIP). The helical transmembrane segment at 858 to 874 (MPVLYGVFLYMGVASLN) threads the bilayer. Residues 875–916 (GVQFMDRLKLLLMPPKYQPDFIYLRHVPLRRVHLFTFLQVVC) are Cytoplasmic-facing. The segment at residues 917 to 942 (LAMLWILKSTVAAIIFPVMILALVAV) is an intramembrane region (discontinuously helical). Residues 943–1035 (RKAMDYFFSQ…PTFLERHTSC (93 aa)) are Cytoplasmic-facing. The interval 968 to 1035 (KKKEDEKKKK…PTFLERHTSC (68 aa)) is disordered. The segment covering 1007 to 1035 (IMEKEPFLIDSKPSDRENSPTFLERHTSC) has biased composition (basic and acidic residues).

Belongs to the anion exchanger (TC 2.A.31) family. As to quaternary structure, homodimer. As to expression, expressed in kidney and to a lower extent in bladder, brain, intestine, large intestine and eye.

Its subcellular location is the basolateral cell membrane. It localises to the cell membrane. The enzyme catalyses 2 hydrogencarbonate(out) + Na(+)(out) = 2 hydrogencarbonate(in) + Na(+)(in). It carries out the reaction 3 hydrogencarbonate(out) + Na(+)(out) = 3 hydrogencarbonate(in) + Na(+)(in). Electrogenic sodium/bicarbonate cotransporter with a Na(+):HCO3(-) stoichiometry varying from 1:2 to 1:3. May regulate bicarbonate influx/efflux at the basolateral membrane of cells and regulate intracellular pH. This chain is Electrogenic sodium bicarbonate cotransporter 1 (SLC4A4), found in Ambystoma tigrinum (Eastern tiger salamander).